We begin with the raw amino-acid sequence, 169 residues long: S-ribosylhomocysteine lyase (169 aa).

3 residues coordinate Fe cation: His-54, His-58, and Cys-128.

The protein belongs to the LuxS family. Homodimer. Fe cation is required as a cofactor.

It catalyses the reaction S-(5-deoxy-D-ribos-5-yl)-L-homocysteine = (S)-4,5-dihydroxypentane-2,3-dione + L-homocysteine. Functionally, involved in the synthesis of autoinducer 2 (AI-2) which is secreted by bacteria and is used to communicate both the cell density and the metabolic potential of the environment. The regulation of gene expression in response to changes in cell density is called quorum sensing. Catalyzes the transformation of S-ribosylhomocysteine (RHC) to homocysteine (HC) and 4,5-dihydroxy-2,3-pentadione (DPD). The protein is S-ribosylhomocysteine lyase of Shewanella pealeana (strain ATCC 700345 / ANG-SQ1).